The chain runs to 155 residues: Histone H3-like 3 (155 aa).

The interval 34–59 (IGVKLPNSYRPGDQTVCKPAPPTDGV) is disordered.

The protein belongs to the histone H3 family. As to quaternary structure, the nucleosome is a histone octamer containing two molecules each of H2A, H2B, H3 and H4 assembled in one H3-H4 heterotetramer and two H2A-H2B heterodimers. The octamer wraps approximately 147 bp of DNA. As to expression, pollen specific.

It is found in the nucleus. The protein localises to the chromosome. Its function is as follows. Core component of nucleosome. Nucleosomes wrap and compact DNA into chromatin, limiting DNA accessibility to the cellular machineries which require DNA as a template. Histones thereby play a central role in transcription regulation, DNA repair, DNA replication and chromosomal stability. DNA accessibility is regulated via a complex set of post-translational modifications of histones, also called histone code, and nucleosome remodeling. The protein is Histone H3-like 3 (leH3) of Lilium longiflorum (Trumpet lily).